Here is a 497-residue protein sequence, read N- to C-terminus: Protein adenylyltransferase Fic (497 aa).

Residues 1 to 30 (MGATDQALEAESKTTEPPKTPPVPEQHDRP) form a disordered region. The chain crosses the membrane as a helical span at residues 38 to 58 (LCHLLVLLFSGGLAAITLHIF). 2 TPR repeats span residues 123–156 (ALGA…APRH) and 157–191 (PTVL…SPSN). Residues 248–253 (TVGIEG) carry the Inhibitory (S/T)XXXE(G/N) motif motif. Residues glutamate 252 and 333-336 (VGGH) each bind ATP. Residues 302 to 437 (ITIKDILELH…IRPFVRFIAD (136 aa)) enclose the Fido domain. Residue histidine 380 is part of the active site. ATP is bound by residues 384 to 391 (DGNGRTSR), 416 to 417 (YY), and asparagine 424. The interval 468–497 (GEGVPQLQSSQMGGGASIPEFHESGSGSLP) is disordered.

Belongs to the fic family. In terms of assembly, homodimer.

It is found in the membrane. It catalyses the reaction L-tyrosyl-[protein] + ATP = O-(5'-adenylyl)-L-tyrosyl-[protein] + diphosphate. The catalysed reaction is L-threonyl-[protein] + ATP = 3-O-(5'-adenylyl)-L-threonyl-[protein] + diphosphate. It carries out the reaction 3-O-(5'-adenylyl)-L-threonyl-[protein] + H2O = L-threonyl-[protein] + AMP + H(+). The side chain of Glu-252 determines which of the two opposing activities (AMPylase or de-AMPylase) will take place. In response to endoplasmic reticulum stress, mediates de-AMPylase activity. Adenylyltransferase activity is inhibited by the inhibitory helix present at the N-terminus: Glu-252 binds ATP and competes with ATP-binding at Arg-391, thereby preventing adenylyltransferase activity. In unstressed cells, disengagement of Glu-252 promotes adenylyltransferase activity. Activation dissociates ATP-binding from Glu-252, allowing ordered binding of the entire ATP moiety with the alpha-phosphate in an orientation that is productive for accepting an incoming target hydroxyl side chain. In terms of biological role, protein that can both mediate the addition of adenosine 5'-monophosphate (AMP) to specific residues of target proteins (AMPylation), and the removal of the same modification from target proteins (de-AMPylation), depending on the context. The side chain of Glu-252 determines which of the two opposing activities (AMPylase or de-AMPylase) will take place. Acts as a key regulator of the unfolded protein response (UPR) by mediating AMPylation or de-AMPylation of Hsc70-3/BiP. In unstressed cells, acts as an adenylyltransferase by mediating AMPylation of Hsc70-3/BiP at 'Thr-518', thereby inactivating it. In response to endoplasmic reticulum stress, acts as a phosphodiesterase by mediating removal of ATP (de-AMPylation) from Hsc70-3/BiP at 'Thr-518', leading to restore HSPA5/BiP activity. The chain is Protein adenylyltransferase Fic from Drosophila ananassae (Fruit fly).